The primary structure comprises 409 residues: Arginine deiminase (409 aa).

Residue C399 is the Amidino-cysteine intermediate of the active site.

It belongs to the arginine deiminase family.

It localises to the cytoplasm. The catalysed reaction is L-arginine + H2O = L-citrulline + NH4(+). The protein operates within amino-acid degradation; L-arginine degradation via ADI pathway; carbamoyl phosphate from L-arginine: step 1/2. The polypeptide is Arginine deiminase (Streptococcus sanguinis (strain SK36)).